The following is a 505-amino-acid chain: MAQIDFRKKINWHRRYRSPQGVKTEHEILRIFESDRGRIINSPAIRRLQQKTQVFPLERNAAVRTRLTHSMEVQQVGRYIAKEILSRLKELKLLEAYGLDELTGPFESIVEMSCLMHDIGNPPFGHFGEAAINDWFRQRLHPEDAESQPLTDDRCSVAALRLRDGEEPLNELRRKIRQDLCHFEGNAQGIRLVHTLMRMNLTWAQVGGILKYTRPAWWRGETPETHHYLMKKPGYYLSEEAYIARLRKELNLALYSRFPLTWIMEAADDISYCVADLEDAVEKRIFTVEQLYHHLHEAWGQHEKGSLFSLVVENAWEKSRSNSLSRSTEDQFFMYLRVNTLNKLVPYAAQRFIDNLPAIFAGTFNHALLEDASECSDLLKLYKNVAVKHVFSHPDVEQLELQGYRVISGLLEIYRPLLSLSLSDFTELVEKERVKRFPIESRLFNKLSTRHRLAYVEAVSKLPSDSPEFPLWEYYYRCRLLQDYISGMTDLYAWDEYRRLMAVEQ.

One can recognise an HD domain in the interval 66–273; that stretch reads RLTHSMEVQQ…MEAADDISYC (208 aa).

The protein belongs to the dGTPase family. Type 1 subfamily. Homotetramer. It depends on Mg(2+) as a cofactor.

It carries out the reaction dGTP + H2O = 2'-deoxyguanosine + triphosphate + H(+). Its function is as follows. dGTPase preferentially hydrolyzes dGTP over the other canonical NTPs. This Escherichia coli O17:K52:H18 (strain UMN026 / ExPEC) protein is Deoxyguanosinetriphosphate triphosphohydrolase.